Here is an 86-residue protein sequence, read N- to C-terminus: Muscarinic toxin-like protein (86 aa).

A signal peptide spans 1-21 (MKTLLLTLAVVTMVCMDLGYT). 4 cysteine pairs are disulfide-bonded: Cys24–Cys45, Cys38–Cys62, Cys66–Cys78, and Cys79–Cys84.

This sequence belongs to the three-finger toxin family. Short-chain subfamily. Orphan group VIII (haditoxin) sub-subfamily. Homodimer; non-covalently linked. Expressed by the venom gland.

It is found in the secreted. Antagonist of muscle and neuronal nicotinic acetylcholine receptors (nAChR) with highest affinity for neuronal alpha-7/CHRNA7 nAChRs. This chain is Muscarinic toxin-like protein, found in Bungarus multicinctus (Many-banded krait).